A 1278-amino-acid polypeptide reads, in one-letter code: Alpha-glucan water dikinase 2 (1278 aa).

The signal sequence occupies residues 1–23 (MATSKSQQFQLIEGMELQITVTG). Catalysis depends on histidine 886, which acts as the Tele-phosphohistidine intermediate.

It belongs to the PEP-utilizing enzyme family. As to quaternary structure, homodimer. Mg(2+) is required as a cofactor.

The catalysed reaction is [(1-&gt;4)-alpha-D-glucosyl](n) + n ATP + n H2O = [(1-&gt;4)-6-phospho-alpha-D-glucosyl](n) + n AMP + n phosphate + 2n H(+). Mediates the incorporation of phosphate into alpha-glucan, mostly at the C-6 position of glucose units. The polypeptide is Alpha-glucan water dikinase 2 (GWD2) (Arabidopsis thaliana (Mouse-ear cress)).